A 963-amino-acid polypeptide reads, in one-letter code: Protein bicaudal C homolog 1-A (963 aa).

The tract at residues 1 to 48 (MAAQCESIGGDMNQSDPGSNSERSADSPVPGSEDDSPHDPEWREERFR) is disordered. The segment covering 12-22 (MNQSDPGSNSE) has biased composition (polar residues). A compositionally biased stretch (basic and acidic residues) spans 35–48 (DSPHDPEWREERFR). KH domains follow at residues 128-195 (RVTL…RVRI) and 280-344 (PVST…RQYL). Polar residues predominate over residues 592-601 (EASRQSNNHS). Disordered regions lie at residues 592 to 613 (EASR…TDPE), 668 to 713 (ERLL…TSQS), and 767 to 834 (LRRA…NKSA). Composition is skewed to basic and acidic residues over residues 602-612 (SAEEVNSKTDP) and 683-696 (VTDK…RAAE). The segment covering 784–797 (ENSSLSRSNSREQL) has biased composition (low complexity). A compositionally biased stretch (polar residues) spans 812-824 (IDSSQNDYSSSIG). The SAM domain occupies 862–925 (FKGSDLPELF…LLAISELNKN (64 aa)).

This sequence belongs to the BicC family.

Putative RNA-binding protein. May be involved in regulating gene expression during embryonic development. Seems to be involved in endoderm formation. Ectopic expression results in endoderm formation in the absence of mesoderm induction. This is Protein bicaudal C homolog 1-A (bicc1-a) from Xenopus laevis (African clawed frog).